Here is a 246-residue protein sequence, read N- to C-terminus: 1-(5-phosphoribosyl)-5-[(5-phosphoribosylamino)methylideneamino] imidazole-4-carboxamide isomerase (246 aa).

Residue D8 is the Proton acceptor of the active site. D131 acts as the Proton donor in catalysis.

It belongs to the HisA/HisF family.

The protein resides in the cytoplasm. It carries out the reaction 1-(5-phospho-beta-D-ribosyl)-5-[(5-phospho-beta-D-ribosylamino)methylideneamino]imidazole-4-carboxamide = 5-[(5-phospho-1-deoxy-D-ribulos-1-ylimino)methylamino]-1-(5-phospho-beta-D-ribosyl)imidazole-4-carboxamide. It participates in amino-acid biosynthesis; L-histidine biosynthesis; L-histidine from 5-phospho-alpha-D-ribose 1-diphosphate: step 4/9. This is 1-(5-phosphoribosyl)-5-[(5-phosphoribosylamino)methylideneamino] imidazole-4-carboxamide isomerase from Lactococcus lactis subsp. cremoris (strain MG1363).